The sequence spans 135 residues: Large ribosomal subunit protein uL16m (135 aa).

It belongs to the universal ribosomal protein uL16 family.

It localises to the mitochondrion. This Marchantia polymorpha (Common liverwort) protein is Large ribosomal subunit protein uL16m (RPL16).